Consider the following 474-residue polypeptide: Nucleobindin-1 (474 aa).

The first 24 residues, 1–24, serve as a signal peptide directing secretion; that stretch reads MPPSGPRAALFLLPSLLLLRAVLA. The residue at position 83 (serine 83) is a Phosphoserine. Threonine 145 carries the phosphothreonine modification. Residues 147–215 adopt a coiled-coil conformation; it reads EARDLELLIQ…QQRRHREHPK (69 aa). A compositionally biased stretch (basic and acidic residues) spans 190-207; that stretch reads SLGEEQRKEAERKLEEQQ. A disordered region spans residues 190-218; sequence SLGEEQRKEAERKLEEQQRRHREHPKVNV. Residues 225–318 are binds to GNAI2 and GNAI3; the sequence is LKEVWEELDG…VTLEEFLAST (94 aa). EF-hand domains are found at residues 237 to 272 and 289 to 324; these read PNRFNPKTFFILHDINSDGVLDEQELEALFTKELEK and ERLRMREHVMKNVDTNQDRLVTLEEFLASTQRKEFG. Aspartate 250, asparagine 252, aspartate 254, glutamate 261, aspartate 302, asparagine 304, aspartate 306, and glutamate 313 together coordinate Ca(2+). The GBA signature appears at 300–330; the sequence is NVDTNQDRLVTLEEFLASTQRKEFGDTGEGW. Positions 355-422 form a coiled coil; sequence AYTEEELRRF…RKQQQQSHNN (68 aa). The disordered stretch occupies residues 382-474; that stretch reads LSQETEALGR…EPPQLDSQHL (93 aa). Serine 383 bears the Phosphoserine mark. The segment covering 448-460 has biased composition (basic and acidic residues); it reads DQKDVDASEKKVP. A Phosphoserine modification is found at serine 471.

Belongs to the nucleobindin family. In terms of assembly, interacts (via GBA motif) with guanine nucleotide-binding protein G(i) alpha subunits GNAI1, GNAI2 and GNAI3 with higher affinity for GNAI1 and GNAI3 than for GNAI2. Preferentially interacts with inactive rather than active GNAI3. Interaction with GNAI3 is inhibited when NUCB1 binds calcium, probably due to a conformational change which renders the GBA motif inaccessible. As to expression, expressed in bone where it is detected in the soft tissue in the center of the osteon and in the osteocyte lacuna (at protein level).

It is found in the golgi apparatus. It localises to the cis-Golgi network membrane. The protein localises to the cytoplasm. Its subcellular location is the secreted. Functionally, major calcium-binding protein of the Golgi which may have a role in calcium homeostasis. Acts as a non-receptor guanine nucleotide exchange factor which binds to and activates alpha subunits of guanine nucleotide-binding proteins (G proteins). The chain is Nucleobindin-1 (NUCB1) from Bos taurus (Bovine).